A 184-amino-acid chain; its full sequence is ATP synthase subunit b, chloroplastic (184 aa).

Residues 27–49 (LATNLINLSVVLGVLIFFGKGVL) form a helical membrane-spanning segment.

Belongs to the ATPase B chain family. In terms of assembly, F-type ATPases have 2 components, F(1) - the catalytic core - and F(0) - the membrane proton channel. F(1) has five subunits: alpha(3), beta(3), gamma(1), delta(1), epsilon(1). F(0) has four main subunits: a(1), b(1), b'(1) and c(10-14). The alpha and beta chains form an alternating ring which encloses part of the gamma chain. F(1) is attached to F(0) by a central stalk formed by the gamma and epsilon chains, while a peripheral stalk is formed by the delta, b and b' chains.

The protein localises to the plastid. Its subcellular location is the chloroplast thylakoid membrane. Functionally, f(1)F(0) ATP synthase produces ATP from ADP in the presence of a proton or sodium gradient. F-type ATPases consist of two structural domains, F(1) containing the extramembraneous catalytic core and F(0) containing the membrane proton channel, linked together by a central stalk and a peripheral stalk. During catalysis, ATP synthesis in the catalytic domain of F(1) is coupled via a rotary mechanism of the central stalk subunits to proton translocation. Its function is as follows. Component of the F(0) channel, it forms part of the peripheral stalk, linking F(1) to F(0). This is ATP synthase subunit b, chloroplastic from Lactuca sativa (Garden lettuce).